A 454-amino-acid polypeptide reads, in one-letter code: Histidine--tRNA ligase (454 aa).

This sequence belongs to the class-II aminoacyl-tRNA synthetase family. In terms of assembly, homodimer.

The protein resides in the cytoplasm. The enzyme catalyses tRNA(His) + L-histidine + ATP = L-histidyl-tRNA(His) + AMP + diphosphate + H(+). This is Histidine--tRNA ligase from Phocaeicola vulgatus (strain ATCC 8482 / DSM 1447 / JCM 5826 / CCUG 4940 / NBRC 14291 / NCTC 11154) (Bacteroides vulgatus).